The sequence spans 856 residues: Envelope glycoprotein gp160 (856 aa).

The first 22 residues, 1–22 (MKGSKNQLLIAIVLASAYLIHC), serve as a signal peptide directing secretion. Residues 23–670 (KQFVTVFYGI…FTSWVRYIQY (648 aa)) are Extracellular-facing. N-linked (GlcNAc...) asparagine; by host glycosylation is present at Asn37. The cysteines at positions 44 and 57 are disulfide-linked. N-linked (GlcNAc...) asparagine; by host glycosylation is found at Asn70, Asn79, Asn112, Asn116, Asn128, Asn133, Asn142, Asn182, Asn183, Asn196, Asn228, Asn231, Asn238, Asn262, Asn268, Asn279, Asn290, Asn300, Asn355, Asn390, Asn400, Asn440, and Asn457. 5 cysteine pairs are disulfide-bonded: Cys101–Cys204, Cys108–Cys195, Cys113–Cys154, Cys217–Cys247, and Cys227–Cys239. Positions 113–153 (CTRNMTTWTGRTDTQNITIINDTSHARADNCTGLKEEEMID) are V1. The V2 stretch occupies residues 154–195 (CQFSMTGLERDKRKQYTEAWYSKDVVCDNNTSSQSKCYMNHC). Residues 295–328 (CKRPGNKTVLPITFMSGFKFHSQPVINKKPRQAW) form a V3 region. Cys295 and Cys329 form a disulfide bridge. 2 cysteine pairs are disulfide-bonded: Cys382/Cys439 and Cys389/Cys412. The V4 stretch occupies residues 389-412 (CNMTWFLNWVENRTGQKQRNYAPC). The segment at 455–460 (QTNITF) is V5. Residues 503–523 (GVFVLGFLGFLATAGSAMGAA) are fusion peptide. Positions 566–582 (LQARVTAIEKYLKDQAQ) are immunosuppression. Residues Asn602, Asn611, and Asn627 are each glycosylated (N-linked (GlcNAc...) asparagine; by host). Residues 615–636 (QEWEQKVRYLEANISQSLEQAQ) adopt a coiled-coil conformation. Residues 648-669 (KLNSWDVFTNWLDFTSWVRYIQ) form an MPER; binding to GalCer region. The helical transmembrane segment at 671 to 691 (GVYVVVGIVALRIVIYIVQML) threads the bilayer. The Cytoplasmic segment spans residues 692–856 (SRLRKGYRPV…IRQGAELALL (165 aa)). The YXXV motif; contains endocytosis signal motif lies at 698 to 701 (YRPV). Cys764 carries the S-palmitoyl cysteine; by host lipid modification. Positions 855–856 (LL) match the Di-leucine internalization motif motif.

In terms of assembly, the mature envelope protein (Env) consists of a homotrimer of non-covalently associated gp120-gp41 heterodimers. The resulting complex protrudes from the virus surface as a spike. There seems to be as few as 10 spikes on the average virion. Interacts with human CD4, CCR5 and CXCR4, to form a P4HB/PDI-CD4-CXCR4-gp120 complex. Gp120 also interacts with the C-type lectins CD209/DC-SIGN and CLEC4M/DC-SIGNR (collectively referred to as DC-SIGN(R)). Gp120 and gp41 interact with GalCer. As to quaternary structure, the mature envelope protein (Env) consists of a homotrimer of non-covalently associated gp120-gp41 heterodimers. The resulting complex protrudes from the virus surface as a spike. There seems to be as few as 10 spikes on the average virion. Specific enzymatic cleavages in vivo yield mature proteins. Envelope glycoproteins are synthesized as an inactive precursor that is heavily N-glycosylated and processed likely by host cell furin in the Golgi to yield the mature SU and TM proteins. The cleavage site between SU and TM requires the minimal sequence [KR]-X-[KR]-R. In terms of processing, palmitoylation of the transmembrane protein and of Env polyprotein (prior to its proteolytic cleavage) is essential for their association with host cell membrane lipid rafts. Palmitoylation is therefore required for envelope trafficking to classical lipid rafts, but not for viral replication.

The protein resides in the virion membrane. Its subcellular location is the host cell membrane. It localises to the host endosome membrane. In terms of biological role, the surface protein gp120 (SU) attaches the virus to the host lymphoid cell by binding to the primary receptor CD4. This interaction induces a structural rearrangement creating a high affinity binding site for a chemokine coreceptor like CXCR4 and/or CCR5. This peculiar 2 stage receptor-interaction strategy allows gp120 to maintain the highly conserved coreceptor-binding site in a cryptic conformation, protected from neutralizing antibodies. Since CD4 also displays a binding site for the disulfide-isomerase P4HB/PDI, a P4HB/PDI-CD4-CXCR4-gp120 complex may form. In that complex, P4HB/PDI could reach and reduce gp120 disulfide bonds, causing major conformational changes in gp120. TXN, another PDI family member could also be involved in disulfide rearrangements in Env during fusion. These changes are transmitted to the transmembrane protein gp41 and are thought to activate its fusogenic potential by unmasking its fusion peptide. The surface protein gp120 is a ligand for CD209/DC-SIGN and CLEC4M/DC-SIGNR, which are respectively found on dendritic cells (DCs), and on endothelial cells of liver sinusoids and lymph node sinuses. These interactions allow capture of viral particles at mucosal surfaces by these cells and subsequent transmission to permissive cells. DCs are professional antigen presenting cells, critical for host immunity by inducing specific immune responses against a broad variety of pathogens. They act as sentinels in various tissues where they take up antigen, process it, and present it to T-cells following migration to lymphoid organs. HIV subverts the migration properties of dendritic cells to gain access to CD4+ T-cells in lymph nodes. Virus transmission to permissive T-cells occurs either in trans (without DCs infection, through viral capture and transmission), or in cis (following DCs productive infection, through the usual CD4-gp120 interaction), thereby inducing a robust infection. In trans infection, bound virions remain infectious over days and it is proposed that they are not degraded, but protected in non-lysosomal acidic organelles within the DCs close to the cell membrane thus contributing to the viral infectious potential during DCs' migration from the periphery to the lymphoid tissues. On arrival at lymphoid tissues, intact virions recycle back to DCs' cell surface allowing virus transmission to CD4+ T-cells. Virion capture also seems to lead to MHC-II-restricted viral antigen presentation, and probably to the activation of HIV-specific CD4+ cells. Its function is as follows. The transmembrane protein gp41 (TM) acts as a class I viral fusion protein. Under the current model, the protein has at least 3 conformational states: pre-fusion native state, pre-hairpin intermediate state, and post-fusion hairpin state. During fusion of viral and target intracellular membranes, the coiled coil regions (heptad repeats) assume a trimer-of-hairpins structure, positioning the fusion peptide in close proximity to the C-terminal region of the ectodomain. The formation of this structure appears to drive apposition and subsequent fusion of viral and target cell membranes. Complete fusion occurs in host cell endosomes and is dynamin-dependent, however some lipid transfer might occur at the plasma membrane. The virus undergoes clathrin-dependent internalization long before endosomal fusion, thus minimizing the surface exposure of conserved viral epitopes during fusion and reducing the efficacy of inhibitors targeting these epitopes. Membranes fusion leads to delivery of the nucleocapsid into the cytoplasm. Functionally, the envelope glycoprotein gp160 precursor down-modulates cell surface CD4 antigen by interacting with it in the endoplasmic reticulum and blocking its transport to the cell surface. In terms of biological role, the gp120-gp41 heterodimer seems to contribute to T-cell depletion during HIV-1 infection. The envelope glycoproteins expressed on the surface of infected cells induce apoptosis through an interaction with uninfected cells expressing the receptor (CD4) and the coreceptors CXCR4 or CCR5. This type of bystander killing may be obtained by at least three distinct mechanisms. First, the interaction between the 2 cells can induce cellular fusion followed by nuclear fusion within the syncytium. Syncytia are condemned to die from apoptosis. Second, the 2 interacting cells may not fuse entirely and simply exchange plasma membrane lipids, after a sort of hemifusion process, followed by rapid death. Third, it is possible that virus-infected cells, on the point of undergoing apoptosis, fuse with CD4-expressing cells, in which case apoptosis is rapidly transmitted from one cell to the other and thus occurs in a sort of contagious fashion. The gp120-gp41 heterodimer allows rapid transcytosis of the virus through CD4 negative cells such as simple epithelial monolayers of the intestinal, rectal and endocervical epithelial barriers. Both gp120 and gp41 specifically recognize glycosphingolipids galactosyl-ceramide (GalCer) or 3' sulfo-galactosyl-ceramide (GalS) present in the lipid rafts structures of epithelial cells. Binding to these alternative receptors allows the rapid transcytosis of the virus through the epithelial cells. This transcytotic vesicle-mediated transport of virions from the apical side to the basolateral side of the epithelial cells does not involve infection of the cells themselves. This chain is Envelope glycoprotein gp160 (env), found in Human immunodeficiency virus type 2 subtype A (isolate NIH-Z) (HIV-2).